The chain runs to 283 residues: Polyamine aminopropyltransferase (283 aa).

The PABS domain occupies E2 to K237. Residue Q31 coordinates S-methyl-5'-thioadenosine. 2 residues coordinate spermidine: H62 and D86. S-methyl-5'-thioadenosine contacts are provided by residues E106 and E137 to G138. D155 functions as the Proton acceptor in the catalytic mechanism. A spermidine-binding site is contributed by D155 to D158. P162 provides a ligand contact to S-methyl-5'-thioadenosine.

It belongs to the spermidine/spermine synthase family. In terms of assembly, homodimer or homotetramer.

The protein localises to the cytoplasm. The enzyme catalyses S-adenosyl 3-(methylsulfanyl)propylamine + putrescine = S-methyl-5'-thioadenosine + spermidine + H(+). It participates in amine and polyamine biosynthesis; spermidine biosynthesis; spermidine from putrescine: step 1/1. In terms of biological role, catalyzes the irreversible transfer of a propylamine group from the amino donor S-adenosylmethioninamine (decarboxy-AdoMet) to putrescine (1,4-diaminobutane) to yield spermidine. The polypeptide is Polyamine aminopropyltransferase (Lachnoclostridium phytofermentans (strain ATCC 700394 / DSM 18823 / ISDg) (Clostridium phytofermentans)).